Here is a 385-residue protein sequence, read N- to C-terminus: GTP cyclohydrolase 1 type 2 homolog (385 aa).

The a divalent metal cation site is built by His-64, His-65, Asp-103, His-333, and Glu-337.

The protein belongs to the GTP cyclohydrolase I type 2/NIF3 family. In terms of assembly, homohexamer.

This Mycobacterium leprae (strain TN) protein is GTP cyclohydrolase 1 type 2 homolog.